The chain runs to 83 residues: Alpha-neurotoxin NTX-1 (83 aa).

Positions 1-21 (MKTLLLTLLVVTIVCLDLGYT) are cleaved as a signal peptide. 4 disulfides stabilise this stretch: Cys-24/Cys-45, Cys-38/Cys-62, Cys-64/Cys-75, and Cys-76/Cys-81.

Belongs to the three-finger toxin family. Short-chain subfamily. Type I alpha-neurotoxin sub-subfamily. In terms of tissue distribution, expressed by the venom gland.

The protein resides in the secreted. Binds to muscle nicotinic acetylcholine receptor (nAChR) and inhibit acetylcholine from binding to the receptor, thereby impairing neuromuscular transmission. The chain is Alpha-neurotoxin NTX-1 from Naja sputatrix (Malayan spitting cobra).